The chain runs to 484 residues: Deoxyribodipyrimidine photo-lyase (484 aa).

Residues 3–132 form the Photolyase/cryptochrome alpha/beta domain; the sequence is APILFWHRRD…RAVQLWDQLL (130 aa). Coenzyme F420-(gamma-Glu)n is bound by residues 36 to 38, Arg51, and 101 to 109; these read CLD and DIEPYGRDR. Residues 141–148 form a DNA-binding region; it reads GSGNPYSV. FAD is bound at residue Tyr228. Residue Arg232 coordinates DNA. 240–247 serves as a coordination point for FAD; it reads TSGLSPAL. Lys248 is a binding site for coenzyme F420-(gamma-Glu)n. Interaction with DNA regions lie at residues 283 to 290 and 349 to 350; these read ELAWREFY and NR. Residues 346-352, 380-382, and Asn386 each bind FAD; these read WMHNRCW and DGD. 2 residues coordinate DNA: Gln411 and Lys472.

The protein belongs to the DNA photolyase class-1 family. Monomer. FAD serves as cofactor. It depends on coenzyme F420-(gamma-Glu)n as a cofactor.

The enzyme catalyses cyclobutadipyrimidine (in DNA) = 2 pyrimidine residues (in DNA).. Functionally, involved in repair of UV radiation-induced DNA damage. Catalyzes the light-dependent monomerization (300-600 nm) of cyclobutyl pyrimidine dimers (in cis-syn configuration), which are formed between adjacent bases on the same DNA strand upon exposure to ultraviolet radiation. This Synechococcus sp. (strain ATCC 27144 / PCC 6301 / SAUG 1402/1) (Anacystis nidulans) protein is Deoxyribodipyrimidine photo-lyase (phr).